A 368-amino-acid polypeptide reads, in one-letter code: Chorismate synthase (368 aa).

NADP(+) is bound at residue arginine 46. FMN is bound by residues 124–126 (RAS), glycine 284, 299–303 (KPTPS), and arginine 326.

This sequence belongs to the chorismate synthase family. The cofactor is FMNH2.

It catalyses the reaction 5-O-(1-carboxyvinyl)-3-phosphoshikimate = chorismate + phosphate. It functions in the pathway metabolic intermediate biosynthesis; chorismate biosynthesis; chorismate from D-erythrose 4-phosphate and phosphoenolpyruvate: step 7/7. Functionally, catalyzes the anti-1,4-elimination of the C-3 phosphate and the C-6 proR hydrogen from 5-enolpyruvylshikimate-3-phosphate (EPSP) to yield chorismate, which is the branch point compound that serves as the starting substrate for the three terminal pathways of aromatic amino acid biosynthesis. This reaction introduces a second double bond into the aromatic ring system. This is Chorismate synthase from Pyrobaculum aerophilum (strain ATCC 51768 / DSM 7523 / JCM 9630 / CIP 104966 / NBRC 100827 / IM2).